We begin with the raw amino-acid sequence, 490 residues long: Cis-aconitate decarboxylase (490 aa).

This sequence belongs to the PrpD family.

It localises to the mitochondrion. It carries out the reaction cis-aconitate + H(+) = itaconate + CO2. Its function is as follows. Involved in the production of itaconic acid, a soluble unsaturated dicarboxylic acid mainly produced from sugars. In Aspergillus terreus, this protein is Cis-aconitate decarboxylase (cad1).